The chain runs to 1054 residues: Isoleucine--tRNA ligase (1054 aa).

A 'HIGH' region motif is present at residues 58–68; that stretch reads PFANGLPHYGH. Positions 627–631 match the 'KMSKS' region motif; it reads KMSKS. Residue lysine 630 coordinates ATP.

The protein belongs to the class-I aminoacyl-tRNA synthetase family. IleS type 2 subfamily. As to quaternary structure, monomer. Requires Zn(2+) as cofactor.

It is found in the cytoplasm. The catalysed reaction is tRNA(Ile) + L-isoleucine + ATP = L-isoleucyl-tRNA(Ile) + AMP + diphosphate. In terms of biological role, catalyzes the attachment of isoleucine to tRNA(Ile). As IleRS can inadvertently accommodate and process structurally similar amino acids such as valine, to avoid such errors it has two additional distinct tRNA(Ile)-dependent editing activities. One activity is designated as 'pretransfer' editing and involves the hydrolysis of activated Val-AMP. The other activity is designated 'posttransfer' editing and involves deacylation of mischarged Val-tRNA(Ile). This chain is Isoleucine--tRNA ligase, found in Corynebacterium efficiens (strain DSM 44549 / YS-314 / AJ 12310 / JCM 11189 / NBRC 100395).